A 179-amino-acid chain; its full sequence is Cytochrome b6-f complex iron-sulfur subunit (179 aa).

Residues 21–43 traverse the membrane as a helical segment; sequence LLTFGTVTGVALGALYPVVNYFI. One can recognise a Rieske domain in the interval 61-162; that stretch reads GNDVSVTKFL…TNVSDDKIVL (102 aa). Residues Cys108, His110, Cys126, and His129 each contribute to the [2Fe-2S] cluster site. An intrachain disulfide couples Cys113 to Cys128.

It belongs to the Rieske iron-sulfur protein family. The 4 large subunits of the cytochrome b6-f complex are cytochrome b6, subunit IV (17 kDa polypeptide, PetD), cytochrome f and the Rieske protein, while the 4 small subunits are PetG, PetL, PetM and PetN. The complex functions as a dimer. Requires [2Fe-2S] cluster as cofactor.

The protein localises to the cellular thylakoid membrane. It catalyses the reaction 2 oxidized [plastocyanin] + a plastoquinol + 2 H(+)(in) = 2 reduced [plastocyanin] + a plastoquinone + 4 H(+)(out). Functionally, component of the cytochrome b6-f complex, which mediates electron transfer between photosystem II (PSII) and photosystem I (PSI), cyclic electron flow around PSI, and state transitions. The protein is Cytochrome b6-f complex iron-sulfur subunit of Nostoc punctiforme (strain ATCC 29133 / PCC 73102).